Here is an 86-residue protein sequence, read N- to C-terminus: Large ribosomal subunit protein bL27 (86 aa).

The segment at 1–26 (MATKKAGGSSRNGRDSAGRRLGVKQS) is disordered.

The protein belongs to the bacterial ribosomal protein bL27 family.

In Rickettsia canadensis (strain McKiel), this protein is Large ribosomal subunit protein bL27.